Consider the following 492-residue polypeptide: Vacuolar fusion protein CCZ1 homolog (492 aa).

The interval 255–275 (SVHAGPTSSSSNGTASVERPL) is disordered. Over residues 260 to 269 (PTSSSSNGTA) the composition is skewed to polar residues.

It belongs to the CCZ1 family. As to quaternary structure, interacts with MON1.

Its subcellular location is the endosome. It is found in the prevacuolar compartment. In terms of biological role, plays an important role in membrane trafficking through the secretory apparatus. In complex with MON1, acts as a guanine exchange factor (GEF) for Rab7 protein family. Promotes the exchange of GDP to GTP, converting it from an inactive GDP-bound form into an active GTP-bound form. The active form is involved in protein trafficking from prevacuolar compartments (PVCs) to vacuoles. May serve as a linker between Rab5 and Rab7 protein families in PVCs and mediate PVC maturation. The polypeptide is Vacuolar fusion protein CCZ1 homolog (Oryza sativa subsp. japonica (Rice)).